The chain runs to 238 residues: MEHKAPLVEFLGLTFNLSDMLMITITCLIVFIIAVAATRSLQLRPTGMQNFMEWVFDFVRGIINSTMDWQTGGRFLTLGVTLIMYVFVANMLGLPFSVHVNGELWWKSPTADATVTLTLAVMVVALTHYYGVKMKGASDYLRDYTRPVAWLFPLKIIEEFANTLTLGLRLFGNIYAGEILLGLLASLGTHYGVLGAVGASQFPIMVWQAFSIFVGTIQAFIFTMLTMVYMAHKVSHDH.

A run of 5 helical transmembrane segments spans residues 17–37, 75–95, 112–132, 179–199, and 202–222; these read LSDMLMITITCLIVFIIAVAA, FLTLGVTLIMYVFVANMLGLP, DATVTLTLAVMVVALTHYYGV, ILLGLLASLGTHYGVLGAVGA, and FPIMVWQAFSIFVGTIQAFIF.

It belongs to the ATPase A chain family. As to quaternary structure, F-type ATPases have 2 components, CF(1) - the catalytic core - and CF(0) - the membrane proton channel. CF(1) has five subunits: alpha(3), beta(3), gamma(1), delta(1), epsilon(1). CF(0) has three main subunits: a(1), b(2) and c(9-12). The alpha and beta chains form an alternating ring which encloses part of the gamma chain. CF(1) is attached to CF(0) by a central stalk formed by the gamma and epsilon chains, while a peripheral stalk is formed by the delta and b chains.

Its subcellular location is the cell membrane. In terms of biological role, key component of the proton channel; it plays a direct role in the translocation of protons across the membrane. In Bacillus sp. (strain PS3), this protein is ATP synthase subunit a.